A 423-amino-acid polypeptide reads, in one-letter code: Putative serpin-Z12 (423 aa).

The tract at residues 1–25 is disordered; the sequence is MAALAAGEPFSGRATGGDGGVRSDV. Residues 370-394 are RCL; it reads GTVAAASTAVVMMQKGSSLPPVDFV.

This sequence belongs to the serpin family.

In terms of biological role, probable serine protease inhibitor. This Oryza sativa subsp. japonica (Rice) protein is Putative serpin-Z12.